The primary structure comprises 714 residues: Probable serine/threonine-protein kinase mkcB (714 aa).

The span at Met1–Phe12 shows a compositional bias: basic residues. Disordered regions lie at residues Met1 to Ser267 and Gly281 to Pro349. The segment covering Gly23–Gln35 has biased composition (basic and acidic residues). The span at Ser62–Leu83 shows a compositional bias: low complexity. A compositionally biased stretch (polar residues) spans His84 to Glu94. Low complexity-rich tracts occupy residues Leu95–Leu111 and Pro120–Thr166. Residues Pro167–Leu177 are compositionally biased toward polar residues. Composition is skewed to low complexity over residues Ser178 to Thr241 and Leu254 to Ser267. Residues Ser282–Pro294 show a composition bias toward polar residues. 2 stretches are compositionally biased toward low complexity: residues Asn300–Ser314 and Asn324–Asn337. Positions Tyr438 to Ile687 constitute a Protein kinase domain. ATP contacts are provided by residues Val444–Val452 and Lys467. Asp558 functions as the Proton acceptor in the catalytic mechanism.

Belongs to the protein kinase superfamily. STE Ser/Thr protein kinase family. STE20 subfamily. Mg(2+) is required as a cofactor. Expressed at equal levels in prestalk and prespore cells.

It carries out the reaction L-seryl-[protein] + ATP = O-phospho-L-seryl-[protein] + ADP + H(+). It catalyses the reaction L-threonyl-[protein] + ATP = O-phospho-L-threonyl-[protein] + ADP + H(+). The chain is Probable serine/threonine-protein kinase mkcB from Dictyostelium discoideum (Social amoeba).